We begin with the raw amino-acid sequence, 274 residues long: tRNA pseudouridine synthase A (274 aa).

Residue Asp-51 is the Nucleophile of the active site. Substrate is bound at residue Tyr-109.

It belongs to the tRNA pseudouridine synthase TruA family. As to quaternary structure, homodimer.

The catalysed reaction is uridine(38/39/40) in tRNA = pseudouridine(38/39/40) in tRNA. Formation of pseudouridine at positions 38, 39 and 40 in the anticodon stem and loop of transfer RNAs. The protein is tRNA pseudouridine synthase A of Acidovorax sp. (strain JS42).